The following is a 282-amino-acid chain: NADPH-dependent 7-cyano-7-deazaguanine reductase (282 aa).

Residue 88-90 (IES) participates in substrate binding. 90–91 (SK) contacts NADPH. Residue C190 is the Thioimide intermediate of the active site. Residue D197 is the Proton donor of the active site. 229–230 (HE) contacts substrate. Residue 258 to 259 (RG) coordinates NADPH.

This sequence belongs to the GTP cyclohydrolase I family. QueF type 2 subfamily. As to quaternary structure, homodimer.

The protein localises to the cytoplasm. The enzyme catalyses 7-aminomethyl-7-carbaguanine + 2 NADP(+) = 7-cyano-7-deazaguanine + 2 NADPH + 3 H(+). It functions in the pathway tRNA modification; tRNA-queuosine biosynthesis. Functionally, catalyzes the NADPH-dependent reduction of 7-cyano-7-deazaguanine (preQ0) to 7-aminomethyl-7-deazaguanine (preQ1). This Escherichia coli O127:H6 (strain E2348/69 / EPEC) protein is NADPH-dependent 7-cyano-7-deazaguanine reductase.